The primary structure comprises 425 residues: CDP-diacylglycerol--serine O-phosphatidyltransferase 1 (425 aa).

Basic and acidic residues predominate over residues 1–16 (MEPNGYRKERRKEQHL). The tract at residues 1–23 (MEPNGYRKERRKEQHLGRMNGGG) is disordered. The next 9 membrane-spanning stretches (helical) occupy residues 42–62 (TISL…ALDP), 79–99 (WAMI…TVLI), 105–125 (IWRL…FLLF), 197–217 (PLLW…RHML), 227–247 (SIVL…MYTV), 296–316 (FIQV…TFFL), 321–341 (WIPP…LIAI), 361–381 (GAFC…CIKF), and 390–410 (MPLW…AFLL).

The protein belongs to the CDP-alcohol phosphatidyltransferase class-I family. Expressed in trichomes, leaf veins and root vasculature.

Its subcellular location is the endoplasmic reticulum membrane. The protein resides in the nucleus envelope. It catalyses the reaction a CDP-1,2-diacyl-sn-glycerol + L-serine = a 1,2-diacyl-sn-glycero-3-phospho-L-serine + CMP + H(+). It functions in the pathway phospholipid metabolism; phosphatidylethanolamine biosynthesis; phosphatidylethanolamine from CDP-diacylglycerol: step 1/2. In terms of biological role, catalyzes a base-exchange reaction in which the polar head group of phosphatidylethanolamine (PE) or phosphatidylcholine (PC) is replaced by L-serine. Is essential for phosphatidylserine (PS) biosynthesis and PE seems to be the most plausible substrate. Plays an important role in microspore maturation. The polypeptide is CDP-diacylglycerol--serine O-phosphatidyltransferase 1 (PSS1) (Arabidopsis thaliana (Mouse-ear cress)).